A 396-amino-acid chain; its full sequence is MAFAPMGPEASFFDALDRHRASLLAMVKRGAGETPAGATRVASSSEVLTAIENIIQDIIKSLARNEVPAFTIDNRSSWENIMFDDSVGLRMIPQCTTRKIRSDSPKSVKKFALILKVLSMIYKLIQSDTYATKRDIYYTDSQLFGNQAAVDSAIDDISCMLKVPRRSLHVLSTSKGLIAGNLRYMEEDGTRVQCTCSATATAVPTNIQGMQHLITDAKFLLIVEKDATFQRLLDDNFCSRMSPCIMVTGKGVPDLNTRLLVKKLWDTFHIPVFTLVDADPYGIEIMCIYKYGSMSMSFEAHNLTIPTIRWLGLLPSDIQRLNIPKDSLIPLTKHDQMKLDSILKRPYITYQPLWKKELEMMADSKMKAEIQALTLLSSDYLSRVYLPNKLRFGGWI.

The Topo IIA-type catalytic domain occupies 42–177; it reads ASSSEVLTAI…LHVLSTSKGL (136 aa). Catalysis depends on Tyr138, which acts as the O-(5'-phospho-DNA)-tyrosine intermediate. Mg(2+) is bound by residues Glu224 and Asp277.

It belongs to the TOP6A family. As to quaternary structure, heterotetramer of SPO11 and 2 TOP6BL chains. Interacts with TOP6BL. Does not interact with TOP6BL. The cofactor is Mg(2+). High levels are found only in the testis where expression is restricted primarily to meiotic germ cells. Not expressed in spermatogonia. Highest levels are found in pachytene spermatocytes. Very low levels are found in thymus, brain and oocytes of embryonic ovary. Not detected in adult ovary. Isoform 1: Expressed early in meiosis, when most double-strand breaks (DSB) are formed.

The protein localises to the nucleus. It carries out the reaction ATP-dependent breakage, passage and rejoining of double-stranded DNA.. Component of a topoisomerase 6 complex specifically required for meiotic recombination. Together with TOP6BL, mediates DNA cleavage that forms the double-strand breaks (DSB) that initiate meiotic recombination. The complex promotes relaxation of negative and positive supercoiled DNA and DNA decatenation through cleavage and ligation cycles. Essential for the phosphorylation of SMC3, HORMAD1 and HORMAD2. Its function is as follows. In contrast to isoform 1, does not mediate DNA cleavage that forms the double-strand breaks (DSB) that initiate meiotic recombination. This is Meiotic recombination protein SPO11 (Spo11) from Mus musculus (Mouse).